Here is a 327-residue protein sequence, read N- to C-terminus: MTHSCRLSVAPMLDWTDRHCRYFHRLLSAQTLLYTEMVTTGAIIHGRGDFLAYNQEEHPVALQFGGSNPKDLAHCAKLAQERGYDEINLNVGCPSDRVQNGRFGACLMGEPDLVAECVAAMRAVVDIPVTVKTRIGIDDQDSYEFLTQFIATVAEKGGCEQFTIHARKAWLSGLSPKENREIPPLDYPRAYQIKRDFPHLTIAVNGGVKSLEEAKLHLQHLDGVMIGREAYQNPYLLAEVDQQIFGLETPVKKRSQVIHEMMPYIERELSQGTHLGHMTRHMLGLFQNMPGARQWRRHISENAHKPGAGLEVVEQALAKIPYQELGV.

FMN is bound by residues 11–13 (PML) and Gln63. Cys93 serves as the catalytic Proton donor. FMN contacts are provided by residues Lys132, His165, 205–207 (NGG), and 227–228 (GR).

It belongs to the Dus family. DusA subfamily. It depends on FMN as a cofactor.

It catalyses the reaction 5,6-dihydrouridine(20) in tRNA + NADP(+) = uridine(20) in tRNA + NADPH + H(+). It carries out the reaction 5,6-dihydrouridine(20) in tRNA + NAD(+) = uridine(20) in tRNA + NADH + H(+). The catalysed reaction is 5,6-dihydrouridine(20a) in tRNA + NADP(+) = uridine(20a) in tRNA + NADPH + H(+). The enzyme catalyses 5,6-dihydrouridine(20a) in tRNA + NAD(+) = uridine(20a) in tRNA + NADH + H(+). Functionally, catalyzes the synthesis of 5,6-dihydrouridine (D), a modified base found in the D-loop of most tRNAs, via the reduction of the C5-C6 double bond in target uridines. Specifically modifies U20 and U20a in tRNAs. The chain is tRNA-dihydrouridine(20/20a) synthase from Vibrio cholerae serotype O1 (strain ATCC 39315 / El Tor Inaba N16961).